The primary structure comprises 140 residues: Nucleoside diphosphate kinase (140 aa).

ATP-binding residues include Lys-11, Phe-59, Arg-87, Thr-93, Arg-104, and Asn-114. The Pros-phosphohistidine intermediate role is filled by His-117.

This sequence belongs to the NDK family. In terms of assembly, homotetramer. Mg(2+) is required as a cofactor.

The protein resides in the cytoplasm. It carries out the reaction a 2'-deoxyribonucleoside 5'-diphosphate + ATP = a 2'-deoxyribonucleoside 5'-triphosphate + ADP. The enzyme catalyses a ribonucleoside 5'-diphosphate + ATP = a ribonucleoside 5'-triphosphate + ADP. Functionally, major role in the synthesis of nucleoside triphosphates other than ATP. The ATP gamma phosphate is transferred to the NDP beta phosphate via a ping-pong mechanism, using a phosphorylated active-site intermediate. The protein is Nucleoside diphosphate kinase of Brucella canis (strain ATCC 23365 / NCTC 10854 / RM-666).